We begin with the raw amino-acid sequence, 757 residues long: RNA-directed RNA polymerase catalytic subunit (757 aa).

The disordered stretch occupies residues 50–82 (SEKGKWTTNTETGAPQLNPIDGPLPEDNEPSGY). The span at 55–64 (WTTNTETGAP) shows a compositional bias: polar residues. 2 consecutive short sequence motifs (nuclear localization signal) follow at residues 187–195 (RKRRVRDNM) and 203–216 (RTIG…NKRS). Residues 249–256 (RGFVYFVE) are promoter-binding site. Residues 286 to 483 (VRKMMTNSQD…GINMSKKKSY (198 aa)) form the RdRp catalytic domain.

The protein belongs to the influenza viruses polymerase PB1 family. As to quaternary structure, influenza RNA polymerase is composed of three subunits: PB1, PB2 and PA. Interacts (via N-terminus) with PA (via C-terminus). Interacts (via C-terminus) with PB2 (via N-terminus); this interaction is essential for transcription initiation. Post-translationally, phosphorylated by host PRKCA.

Its subcellular location is the host nucleus. It is found in the host cytoplasm. The enzyme catalyses RNA(n) + a ribonucleoside 5'-triphosphate = RNA(n+1) + diphosphate. Functionally, RNA-dependent RNA polymerase which is responsible for replication and transcription of virus RNA segments. The transcription of viral mRNAs occurs by a unique mechanism called cap-snatching. 5' methylated caps of cellular mRNAs are cleaved after 10-13 nucleotides by PA. In turn, these short capped RNAs are used as primers by PB1 for transcription of viral mRNAs. During virus replication, PB1 initiates RNA synthesis and copy vRNA into complementary RNA (cRNA) which in turn serves as a template for the production of more vRNAs. The chain is RNA-directed RNA polymerase catalytic subunit from Influenza A virus (strain A/Memphis/110/1976 H3N2).